The primary structure comprises 59 residues: UPF0181 protein YoaH (59 aa).

Belongs to the UPF0181 family.

The polypeptide is UPF0181 protein YoaH (Shigella flexneri).